A 525-amino-acid polypeptide reads, in one-letter code: GMP synthase [glutamine-hydrolyzing] (525 aa).

One can recognise a Glutamine amidotransferase type-1 domain in the interval 9–207; sequence RILILDFGSQ…VRDICQCEAL (199 aa). Cys86 serves as the catalytic Nucleophile. Active-site residues include His181 and Glu183. Residues 208 to 400 form the GMPS ATP-PPase domain; that stretch reads WTPAKIIDDA…LGLPYDMLYR (193 aa). 235-241 lines the ATP pocket; the sequence is SGGVDSS.

Homodimer.

It carries out the reaction XMP + L-glutamine + ATP + H2O = GMP + L-glutamate + AMP + diphosphate + 2 H(+). It participates in purine metabolism; GMP biosynthesis; GMP from XMP (L-Gln route): step 1/1. Catalyzes the synthesis of GMP from XMP. In Salmonella schwarzengrund (strain CVM19633), this protein is GMP synthase [glutamine-hydrolyzing].